The following is a 490-amino-acid chain: MELHELTLEGARALLLSGEISSKDLTTCLLDRIKTHDADLGAFITVDAAGALEAATAADERIARGEDAPLLGIPLALKDLLCTSGVRTTCASKILENFVPTYDATAVTLLKQAGAVIVGKTNLDEFGMGSSTENSAFHLTRNPWNLDHVPGGSSGGSAAAVAARMCTAALGTDTGGSIRQPASHCGVVGLKPSYGRVSRFGMVAYASSLDQIGPITRTVKDAALMMNVISGHDPKDSTSAAIDKPDFTQAFAGFDAKGLAGMKAGIPREYIGMKGLDPEVERSFKNACKVLEDLGVEVIDVSLPHTNFAVAAYYVLAPSEASANLSRYDGVKYGFRQTGCDDLMDMYKQTRSSGFGPEVKRRIIMGTYALSAGYYDEYYGRASRVRTLIMADFSKAFDQCDIILSPVAPTPAFKIGENVDDPLTMYLGDIFTLSANMAGIPGLSVPCAMSTTGLPIGLQILGRRFDEMSVLKAGYGLEQRCPGLPGLPNL.

Active-site charge relay system residues include Lys78 and Ser153. Ser177 acts as the Acyl-ester intermediate in catalysis.

It belongs to the amidase family. GatA subfamily. In terms of assembly, heterotrimer of A, B and C subunits.

It carries out the reaction L-glutamyl-tRNA(Gln) + L-glutamine + ATP + H2O = L-glutaminyl-tRNA(Gln) + L-glutamate + ADP + phosphate + H(+). In terms of biological role, allows the formation of correctly charged Gln-tRNA(Gln) through the transamidation of misacylated Glu-tRNA(Gln) in organisms which lack glutaminyl-tRNA synthetase. The reaction takes place in the presence of glutamine and ATP through an activated gamma-phospho-Glu-tRNA(Gln). In Desulforapulum autotrophicum (strain ATCC 43914 / DSM 3382 / VKM B-1955 / HRM2) (Desulfobacterium autotrophicum), this protein is Glutamyl-tRNA(Gln) amidotransferase subunit A.